A 189-amino-acid chain; its full sequence is dCTP deaminase (189 aa).

Residues 112 to 117 (KSTYAR), 136 to 138 (TLE), glutamine 157, tyrosine 171, and glutamine 181 each bind dCTP. Glutamate 138 functions as the Proton donor/acceptor in the catalytic mechanism.

The protein belongs to the dCTP deaminase family. Homotrimer.

The enzyme catalyses dCTP + H2O + H(+) = dUTP + NH4(+). It functions in the pathway pyrimidine metabolism; dUMP biosynthesis; dUMP from dCTP (dUTP route): step 1/2. Catalyzes the deamination of dCTP to dUTP. In Halorhodospira halophila (strain DSM 244 / SL1) (Ectothiorhodospira halophila (strain DSM 244 / SL1)), this protein is dCTP deaminase.